Reading from the N-terminus, the 1230-residue chain is Soluble starch synthase 3, chloroplastic/amyloplastic (1230 aa).

Residues 1–60 (MDVPFPLHRSLSCTSVSNAITHLKIKPILGFVSHGTTSLSVQSSSWRKDGMVTGVSFSIC) constitute a chloroplast transit peptide. Positions 66 to 189 (RRRRKVSTPR…KDAVKLNKSK (124 aa)) are disordered. Positions 124–145 (VEARVETSDDDTKGVVRDHKFL) are enriched in basic and acidic residues. A compositionally biased stretch (polar residues) spans 152-170 (NGSTKSISMSPVRVSSQFV). Positions 177-189 (GDDKDAVKLNKSK) are enriched in basic and acidic residues. Lys794 is an ADP-alpha-D-glucose binding site.

The protein belongs to the glycosyltransferase 1 family. Bacterial/plant glycogen synthase subfamily. In terms of tissue distribution, tuber, sink and source leaves.

The protein resides in the plastid. The protein localises to the chloroplast. Its subcellular location is the amyloplast. The enzyme catalyses [(1-&gt;4)-alpha-D-glucosyl](n) + ADP-alpha-D-glucose = [(1-&gt;4)-alpha-D-glucosyl](n+1) + ADP + H(+). The protein operates within glycan biosynthesis; starch biosynthesis. Its function is as follows. May account for most of the soluble starch synthase activity in the tubers. Contributes only a tiny percentage of the granule-bound activity, but may also contribute to the deposition of transient starch in chloroplasts of leaves. The protein is Soluble starch synthase 3, chloroplastic/amyloplastic (SS3) of Solanum tuberosum (Potato).